Here is a 588-residue protein sequence, read N- to C-terminus: Nucleoporin ndc-1 (588 aa).

Residues 1–12 (MMGDSHSSFTTT) show a composition bias toward polar residues. The segment at 1–55 (MMGDSHSSFTTTTDEHLYNQFSPGRRKNDFPAASSSSSSPNLRRSPNRTVSSPRV) is disordered. The Cytoplasmic portion of the chain corresponds to 1–79 (MMGDSHSSFT…FQAEISVRKR (79 aa)). Residues 31 to 48 (PAASSSSSSPNLRRSPNR) show a composition bias toward low complexity. Residues 80–100 (LAGAACGYLSTIFFIVTVSIL) traverse the membrane as a helical segment. Residues 101–122 (KLTIWAPFSSVQDSLAWWIYPN) are Perinuclear space-facing. A helical transmembrane segment spans residues 123–143 (AWASIIFVGIASVAMSLFSII). Topologically, residues 144–159 (KFCKVDQLPRLAATDT) are cytoplasmic. A helical transmembrane segment spans residues 160–180 (FALAGVALEFVTRLTFVYTAF). Over 181 to 190 (CVADFSFSRE) the chain is Perinuclear space. Residues 191 to 211 (FAFVAISLAIAISSALVVFRS) form a helical membrane-spanning segment. Residues 212–255 (DYQLNFSHIQVNSVKTLIDFGTSLPYANISEICGIDAAISYTAA) lie on the Cytoplasmic side of the membrane. The helical transmembrane segment at 256–276 (VALILVVGPMVSGFSAWWLLL) threads the bilayer. A topological domain (perinuclear space) is located at residue asparagine 277. The helical transmembrane segment at 278–298 (IPFHVVLFGLCFTQQFYSKIS) threads the bilayer. At 299–588 (MKIVNQIVMK…IRMICLTDEL (290 aa)) the chain is on the cytoplasmic side.

Belongs to the NDC1 family.

Its subcellular location is the nucleus. The protein resides in the nuclear pore complex. It is found in the nucleus membrane. Its function is as follows. Component of the nuclear pore complex (NPC), which plays a key role in de novo assembly and insertion of NPC in the nuclear envelope. Plays a role in postmitotic nuclear pore complex assembly potentially by promoting localization of nuclear pore complex proteins to the nuclear rim. The chain is Nucleoporin ndc-1 from Caenorhabditis elegans.